A 186-amino-acid chain; its full sequence is Chromosomal replication initiator protein DnaA (186 aa).

Glu-1 is a region of interest (domain I, interacts with DnaA modulators). A region of interest (domain II) is located at residue Glu-1. Residues 1–99 form a domain III, AAA+ region region; sequence EFFKTFNALI…GALNKVTHTS (99 aa). The domain IV, binds dsDNA stretch occupies residues 100–186; it reads LIGRSMTVES…GRNFGGRDHT (87 aa).

This sequence belongs to the DnaA family. As to quaternary structure, oligomerizes as a right-handed, spiral filament on DNA at oriC.

Its subcellular location is the cytoplasm. Its function is as follows. Plays an essential role in the initiation and regulation of chromosomal replication. ATP-DnaA binds to the origin of replication (oriC) to initiate formation of the DNA replication initiation complex once per cell cycle. Binds the DnaA box (a 9 base pair repeat at the origin) and separates the double-stranded (ds)DNA. Forms a right-handed helical filament on oriC DNA; dsDNA binds to the exterior of the filament while single-stranded (ss)DNA is stabiized in the filament's interior. The ATP-DnaA-oriC complex binds and stabilizes one strand of the AT-rich DNA unwinding element (DUE), permitting loading of DNA polymerase. After initiation quickly degrades to an ADP-DnaA complex that is not apt for DNA replication. Binds acidic phospholipids. The protein is Chromosomal replication initiator protein DnaA of Wolbachia sp.